The chain runs to 58 residues: UPF0391 membrane protein Sbal195_1447 (58 aa).

2 helical membrane-spanning segments follow: residues L6–A26 and A28–V48.

Belongs to the UPF0391 family.

The protein localises to the cell membrane. This is UPF0391 membrane protein Sbal195_1447 from Shewanella baltica (strain OS195).